Reading from the N-terminus, the 88-residue chain is UPF0297 protein LAR_0520 (88 aa).

The protein belongs to the UPF0297 family.

The polypeptide is UPF0297 protein LAR_0520 (Limosilactobacillus reuteri subsp. reuteri (strain JCM 1112) (Lactobacillus reuteri)).